The sequence spans 389 residues: Tryptophan synthase beta chain 1 (389 aa).

An N6-(pyridoxal phosphate)lysine modification is found at Lys84.

It belongs to the TrpB family. In terms of assembly, tetramer of two alpha and two beta chains. The cofactor is pyridoxal 5'-phosphate.

It localises to the plastid. The protein localises to the chloroplast. It catalyses the reaction (1S,2R)-1-C-(indol-3-yl)glycerol 3-phosphate + L-serine = D-glyceraldehyde 3-phosphate + L-tryptophan + H2O. It participates in amino-acid biosynthesis; L-tryptophan biosynthesis; L-tryptophan from chorismate: step 5/5. In terms of biological role, the beta subunit is responsible for the synthesis of L-tryptophan from indole and L-serine. The protein is Tryptophan synthase beta chain 1 (TSB1) of Zea mays (Maize).